The chain runs to 426 residues: DNA primase DnaG (426 aa).

In terms of domain architecture, Toprim spans 165–241 (DEIIIVEGRA…DIDYVAKAPP (77 aa)). The Mg(2+) site is built by Glu171, Asp215, and Asp217. Residues 278 to 298 (PAVEERPQPPQPQPPAVQPVQ) form a disordered region. Pro residues predominate over residues 285–294 (QPPQPQPPAV).

The protein belongs to the archaeal DnaG primase family. As to quaternary structure, forms a ternary complex with MCM helicase and DNA. Component of the archaeal exosome complex. The cofactor is Mg(2+).

The catalysed reaction is ssDNA + n NTP = ssDNA/pppN(pN)n-1 hybrid + (n-1) diphosphate.. Functionally, RNA polymerase that catalyzes the synthesis of short RNA molecules used as primers for DNA polymerase during DNA replication. Also part of the exosome, which is a complex involved in RNA degradation. Acts as a poly(A)-binding protein that enhances the interaction between heteromeric, adenine-rich transcripts and the exosome. This chain is DNA primase DnaG, found in Hyperthermus butylicus (strain DSM 5456 / JCM 9403 / PLM1-5).